A 939-amino-acid polypeptide reads, in one-letter code: Isoleucine--tRNA ligase (939 aa).

The 'HIGH' region signature appears at 59 to 69; that stretch reads PYANGDIHIGH. Residue glutamate 570 participates in L-isoleucyl-5'-AMP binding. The short motif at 611-615 is the 'KMSKS' region element; it reads KMSKS. Lysine 614 is an ATP binding site. Residues cysteine 902, cysteine 905, cysteine 922, and cysteine 925 each coordinate Zn(2+).

This sequence belongs to the class-I aminoacyl-tRNA synthetase family. IleS type 1 subfamily. In terms of assembly, monomer. It depends on Zn(2+) as a cofactor.

It is found in the cytoplasm. The enzyme catalyses tRNA(Ile) + L-isoleucine + ATP = L-isoleucyl-tRNA(Ile) + AMP + diphosphate. Its function is as follows. Catalyzes the attachment of isoleucine to tRNA(Ile). As IleRS can inadvertently accommodate and process structurally similar amino acids such as valine, to avoid such errors it has two additional distinct tRNA(Ile)-dependent editing activities. One activity is designated as 'pretransfer' editing and involves the hydrolysis of activated Val-AMP. The other activity is designated 'posttransfer' editing and involves deacylation of mischarged Val-tRNA(Ile). The polypeptide is Isoleucine--tRNA ligase (Nitrosomonas europaea (strain ATCC 19718 / CIP 103999 / KCTC 2705 / NBRC 14298)).